The sequence spans 474 residues: 3-isopropylmalate dehydratase large subunit (474 aa).

The [4Fe-4S] cluster site is built by Cys355, Cys415, and Cys418.

Belongs to the aconitase/IPM isomerase family. LeuC type 1 subfamily. Heterodimer of LeuC and LeuD. [4Fe-4S] cluster is required as a cofactor.

It carries out the reaction (2R,3S)-3-isopropylmalate = (2S)-2-isopropylmalate. It participates in amino-acid biosynthesis; L-leucine biosynthesis; L-leucine from 3-methyl-2-oxobutanoate: step 2/4. Functionally, catalyzes the isomerization between 2-isopropylmalate and 3-isopropylmalate, via the formation of 2-isopropylmaleate. The protein is 3-isopropylmalate dehydratase large subunit of Shewanella sp. (strain W3-18-1).